The primary structure comprises 139 residues: Actin-depolymerizing factor 3 (139 aa).

The 135-residue stretch at 5–139 (ASGMAVHDDC…DLDVFKSRAN (135 aa)) folds into the ADF-H domain. Residue S6 is modified to Phosphoserine.

This sequence belongs to the actin-binding proteins ADF family.

It is found in the cytoplasm. The protein localises to the cytoskeleton. Actin-depolymerizing protein. Severs actin filaments (F-actin) and binds to actin monomers. This is Actin-depolymerizing factor 3 (ADF3) from Arabidopsis thaliana (Mouse-ear cress).